Reading from the N-terminus, the 354-residue chain is tRNA N6-adenosine threonylcarbamoyltransferase (354 aa).

Positions 111 and 115 each coordinate Fe cation. Substrate contacts are provided by residues 134–138, aspartate 167, glycine 180, and asparagine 279; that span reads LVSGG. Aspartate 319 provides a ligand contact to Fe cation.

This sequence belongs to the KAE1 / TsaD family. Fe(2+) is required as a cofactor.

The protein resides in the cytoplasm. The catalysed reaction is L-threonylcarbamoyladenylate + adenosine(37) in tRNA = N(6)-L-threonylcarbamoyladenosine(37) in tRNA + AMP + H(+). Its function is as follows. Required for the formation of a threonylcarbamoyl group on adenosine at position 37 (t(6)A37) in tRNAs that read codons beginning with adenine. Is involved in the transfer of the threonylcarbamoyl moiety of threonylcarbamoyl-AMP (TC-AMP) to the N6 group of A37, together with TsaE and TsaB. TsaD likely plays a direct catalytic role in this reaction. The polypeptide is tRNA N6-adenosine threonylcarbamoyltransferase (Neisseria meningitidis serogroup B (strain ATCC BAA-335 / MC58)).